We begin with the raw amino-acid sequence, 439 residues long: MKTKKFYQHLYFQVLTAISFGVALGYYLPDTGTAMKPLGDGFIKMIKMIITPIIFCTVVTGIAGMDDMKKVGRVGGKALLYFEAVSTLALGIGLVVINIIQPGVGMNADVTKLDTKGLDTYTATAAKGHSFVDFVLGVIPNSVVDAFAKGEILQVLFFAILFGLALSAMGEKGKPVYRLIDEVAHAFFGVVNIIMKFAPIGAFGAMAFTIGKFGLGSLTKLGMLMGSFYLTCLLFVFVVLGTIGKLCGFNIFKFISYIKEELLIVLGTSSSESALPRMMAKLENLGCSKSVVGLVIPTGYSFNLDGTSIYLTMAAVFVAQATNTPLDLTQTLTILGVLMLTSKGAAGVTGSGFVTLAATFAAIPTIPVAGLALILGIDRFMSEARALTNLVGNGVATVVVSRWENELDVARMSQVLNKELDEADGEADLLMMDPEPEEA.

A run of 9 helical transmembrane segments spans residues 9 to 29, 45 to 65, 80 to 100, 150 to 170, 186 to 206, 221 to 241, 291 to 311, 334 to 354, and 357 to 377; these read HLYF…YYLP, MIKM…IAGM, LYFE…INII, GEIL…SAMG, AFFG…FGAM, LGML…VVLG, VVGL…SIYL, ILGV…SGFV, and AATF…ILGI.

This sequence belongs to the dicarboxylate/amino acid:cation symporter (DAACS) (TC 2.A.23) family.

The protein localises to the cell inner membrane. Responsible for the transport of dicarboxylates such as succinate, fumarate, and malate from the periplasm across the membrane. This Geobacter sp. (strain M21) protein is C4-dicarboxylate transport protein.